The sequence spans 257 residues: BTB/POZ domain-containing protein KCTD1 (257 aa).

Residues 1 to 25 (MSRPLITRSPASPLNNQGIPTPAQL) are disordered. Phosphoserine is present on residues serine 9 and serine 12. The span at 9-25 (SPASPLNNQGIPTPAQL) shows a compositional bias: polar residues. Positions 30-100 (APVHIDVGGH…LRTSKLLIPD (71 aa)) constitute a BTB domain.

As to quaternary structure, forms homopentamers. Interacts with KCTD15, probably forming heteropentamers depending on its abundance in a cell-type dependent manner. Interacts with TFAP2A, TFAP2B and TFAP2C via the BTB domain. In terms of processing, sumoylated.

The protein resides in the nucleus. May repress the transcriptional activity of AP-2 family members, including TFAP2A, TFAP2B and TFAP2C to various extent. This is BTB/POZ domain-containing protein KCTD1 (KCTD1) from Bos taurus (Bovine).